Reading from the N-terminus, the 156-residue chain is Small ribosomal subunit protein uS7 (156 aa).

This sequence belongs to the universal ribosomal protein uS7 family. In terms of assembly, part of the 30S ribosomal subunit. Contacts proteins S9 and S11.

Its function is as follows. One of the primary rRNA binding proteins, it binds directly to 16S rRNA where it nucleates assembly of the head domain of the 30S subunit. Is located at the subunit interface close to the decoding center, probably blocks exit of the E-site tRNA. The chain is Small ribosomal subunit protein uS7 from Desulfitobacterium hafniense (strain DSM 10664 / DCB-2).